The primary structure comprises 81 residues: Trefoil factor 3 (81 aa).

The signal sequence occupies residues 1-22; it reads METRAFWTTLLLVLVAGSSCKA. One can recognise a P-type domain in the interval 31-74; it reads SQCMVPANVRVDCGYPTVTSEQCNNRGCCFDSSIPNVPWCFKPL. Disulfide bonds link C33-C59, C43-C58, and C53-C70.

In terms of assembly, monomer. Homodimer; disulfide-linked. As to expression, expressed in goblet cells of the intestines, and colon, in paraventricular hypothalamus and supraoptic nuclei. Weakly expressed in gastric epithelial cells (at protein level). Expressed by goblet cells of small and large intestinal epithelia, kidney and stomach. Expressed in the paraventricular hypothalamus, arcuate nucleus and amygdala of the brain. Weakly expressed in gastric epithelial cells.

The protein localises to the secreted. It is found in the extracellular space. Its subcellular location is the extracellular matrix. The protein resides in the cytoplasm. Functionally, involved in the maintenance and repair of the intestinal mucosa. Promotes the mobility of epithelial cells in healing processes (motogen). The protein is Trefoil factor 3 (Tff3) of Rattus norvegicus (Rat).